Reading from the N-terminus, the 307-residue chain is Nucleotide-binding protein Arth_2083 (307 aa).

30–37 (GMSGAGRS) contributes to the ATP binding site. 81–84 (DVRS) contributes to the GTP binding site.

Belongs to the RapZ-like family.

In terms of biological role, displays ATPase and GTPase activities. The chain is Nucleotide-binding protein Arth_2083 from Arthrobacter sp. (strain FB24).